Consider the following 126-residue polypeptide: Glycine cleavage system H protein (126 aa).

Positions Ile22 to Lys104 constitute a Lipoyl-binding domain. Lys63 carries the post-translational modification N6-lipoyllysine.

Belongs to the GcvH family. As to quaternary structure, the glycine cleavage system is composed of four proteins: P, T, L and H. It depends on (R)-lipoate as a cofactor.

Its function is as follows. The glycine cleavage system catalyzes the degradation of glycine. The H protein shuttles the methylamine group of glycine from the P protein to the T protein. The sequence is that of Glycine cleavage system H protein from Bacteroides thetaiotaomicron (strain ATCC 29148 / DSM 2079 / JCM 5827 / CCUG 10774 / NCTC 10582 / VPI-5482 / E50).